Reading from the N-terminus, the 91-residue chain is Large ribosomal subunit protein bL31B (91 aa).

This sequence belongs to the bacterial ribosomal protein bL31 family. Type B subfamily. In terms of assembly, part of the 50S ribosomal subunit.

The polypeptide is Large ribosomal subunit protein bL31B (Neisseria gonorrhoeae (strain ATCC 700825 / FA 1090)).